Here is a 211-residue protein sequence, read N- to C-terminus: Small ribosomal subunit protein uS3 (211 aa).

Residues 38–106 (LRNFLKKRLY…EIYLNIQEVR (69 aa)) form the KH type-2 domain.

The protein belongs to the universal ribosomal protein uS3 family. Part of the 30S ribosomal subunit. Forms a tight complex with proteins S10 and S14.

Its function is as follows. Binds the lower part of the 30S subunit head. Binds mRNA in the 70S ribosome, positioning it for translation. This is Small ribosomal subunit protein uS3 from Geobacter sulfurreducens (strain ATCC 51573 / DSM 12127 / PCA).